The sequence spans 177 residues: Large ribosomal subunit protein uL6 (177 aa).

It belongs to the universal ribosomal protein uL6 family. Part of the 50S ribosomal subunit.

Functionally, this protein binds to the 23S rRNA, and is important in its secondary structure. It is located near the subunit interface in the base of the L7/L12 stalk, and near the tRNA binding site of the peptidyltransferase center. The sequence is that of Large ribosomal subunit protein uL6 from Neisseria gonorrhoeae (strain ATCC 700825 / FA 1090).